Here is a 333-residue protein sequence, read N- to C-terminus: Glyceraldehyde-3-phosphate dehydrogenase (333 aa).

NAD(+)-binding positions include 11–12 (RI), Asp-32, and Arg-77. D-glyceraldehyde 3-phosphate-binding positions include 148–150 (SCT), Thr-179, 208–209 (TG), and Arg-231. Residue Cys-149 is the Nucleophile of the active site. Asn-313 lines the NAD(+) pocket.

Belongs to the glyceraldehyde-3-phosphate dehydrogenase family. Homotetramer.

Its subcellular location is the cytoplasm. The catalysed reaction is D-glyceraldehyde 3-phosphate + phosphate + NAD(+) = (2R)-3-phospho-glyceroyl phosphate + NADH + H(+). Its pathway is carbohydrate degradation; glycolysis; pyruvate from D-glyceraldehyde 3-phosphate: step 1/5. In Glossina morsitans morsitans (Savannah tsetse fly), this protein is Glyceraldehyde-3-phosphate dehydrogenase (Gapdh).